Here is a 781-residue protein sequence, read N- to C-terminus: Coiled-coil and C2 domain-containing protein 1-like (781 aa).

Disordered stretches follow at residues 32–63, 94–134, 187–296, 313–373, and 403–447; these read MGRV…NVPG, ELNG…APNS, ESEI…AKES, CSAD…TEGN, and GELP…VEGK. Residues 37–59 show a composition bias toward low complexity; sequence RPAAPARGAPPAARGRPAPAAPA. Positions 98–107 are enriched in gly residues; it reads LVGGGGGGGA. The span at 108–118 shows a compositional bias: low complexity; sequence APTVPTRAAPR. Pro residues-rich tracts occupy residues 119 to 129 and 204 to 222; these read APGPSGPPPSA and PLPP…PAPP. Positions 244–256 are enriched in low complexity; sequence APAPTAAAPPATK. The span at 269-280 shows a compositional bias: basic residues; sequence ILHHRRDLHKQN. The segment covering 285–296 has biased composition (basic and acidic residues); sequence IADKDKESAKES. The span at 324-341 shows a compositional bias: pro residues; the sequence is PPSPPPYRKPAPPQPQAP. Over residues 363–373 the composition is skewed to basic and acidic residues; the sequence is KMAEKAKTEGN. Residues 605 to 741 enclose the C2 domain; sequence YEMRQIPSAD…EHSAEMEESL (137 aa).

It belongs to the CC2D1 family.

This is Coiled-coil and C2 domain-containing protein 1-like from Caenorhabditis elegans.